The primary structure comprises 382 residues: Mannosyl phosphorylinositol ceramide synthase SUR1 (382 aa).

Residues 1–6 (MRKELK) are Cytoplasmic-facing. Residues 7–27 (YLICFNILLLLSIIYYTFDLL) traverse the membrane as a helical segment. At 28-269 (TLCIDDTVKD…KALENHILSC (242 aa)) the chain is on the extracellular side. The chain crosses the membrane as a helical span at residues 270-290 (VVTGFIFGFFILYGEFTFYCW). Residues 291–382 (LCSKNFSNLT…SKYSLGNNSS (92 aa)) are Cytoplasmic-facing. Serine 349 carries the phosphoserine modification.

It belongs to the glycosyltransferase 32 family. In terms of assembly, heterodimer of SUR1 and CSG2.

Its subcellular location is the membrane. It catalyses the reaction a 1D-myo-inositol-1-phospho-N-[(R)-2-hydroxy-very-long-chain fatty acyl]-(R)-4-hydroxysphingoid base + GDP-alpha-D-mannose = an alpha-D-mannosyl-(1&lt;-&gt;6)-1D-myo-inositol-1-phospho-N-[(R)-2-hydroxy-very-long-chain fatty acyl]-(R)-4-hydroxysphingoid base + GDP + H(+). In terms of biological role, involved in the synthesis of mannosyl phosphorylinositol ceramide. Catalyzes the addition of mannosyl to phosphorylinositol ceramide. Suppressor of RVS161 mutation. The protein is Mannosyl phosphorylinositol ceramide synthase SUR1 of Saccharomyces cerevisiae (strain ATCC 204508 / S288c) (Baker's yeast).